Here is a 602-residue protein sequence, read N- to C-terminus: Arginine--tRNA ligase (602 aa).

The short motif at 132–142 (ANPTGPLHVGH) is the 'HIGH' region element.

This sequence belongs to the class-I aminoacyl-tRNA synthetase family. Monomer.

It is found in the cytoplasm. It carries out the reaction tRNA(Arg) + L-arginine + ATP = L-arginyl-tRNA(Arg) + AMP + diphosphate. The polypeptide is Arginine--tRNA ligase (Cupriavidus metallidurans (strain ATCC 43123 / DSM 2839 / NBRC 102507 / CH34) (Ralstonia metallidurans)).